The sequence spans 118 residues: Ribulose bisphosphate carboxylase small subunit (118 aa).

The protein belongs to the RuBisCO small chain family. Heterohexadecamer of 8 large and 8 small subunits.

Functionally, ruBisCO catalyzes two reactions: the carboxylation of D-ribulose 1,5-bisphosphate, the primary event in carbon dioxide fixation, as well as the oxidative fragmentation of the pentose substrate. Both reactions occur simultaneously and in competition at the same active site. Although the small subunit is not catalytic it is essential for maximal activity. The protein is Ribulose bisphosphate carboxylase small subunit of Thiobacillus denitrificans (strain ATCC 25259 / T1).